A 318-amino-acid polypeptide reads, in one-letter code: ATP synthase gamma chain (318 aa).

The protein belongs to the ATPase gamma chain family. F-type ATPases have 2 components, CF(1) - the catalytic core - and CF(0) - the membrane proton channel. CF(1) has five subunits: alpha(3), beta(3), gamma(1), delta(1), epsilon(1). CF(0) has three main subunits: a, b and c.

It is found in the cell membrane. In terms of biological role, produces ATP from ADP in the presence of a proton gradient across the membrane. The gamma chain is believed to be important in regulating ATPase activity and the flow of protons through the CF(0) complex. The protein is ATP synthase gamma chain of Lactobacillus johnsonii (strain CNCM I-12250 / La1 / NCC 533).